Consider the following 122-residue polypeptide: Iron-sulfur cluster insertion protein ErpA (122 aa).

Iron-sulfur cluster-binding residues include Cys-50, Cys-114, and Cys-116.

This sequence belongs to the HesB/IscA family. Homodimer. Iron-sulfur cluster serves as cofactor.

Its function is as follows. Required for insertion of 4Fe-4S clusters for at least IspG. The protein is Iron-sulfur cluster insertion protein ErpA of Alkalilimnicola ehrlichii (strain ATCC BAA-1101 / DSM 17681 / MLHE-1).